The chain runs to 192 residues: UPF0312 protein PFLU_5725 (192 aa).

The first 23 residues, 1 to 23, serve as a signal peptide directing secretion; it reads MLKKTLAALAIGTALLSAGQVMA.

This sequence belongs to the UPF0312 family. Type 1 subfamily.

The protein localises to the periplasm. This chain is UPF0312 protein PFLU_5725, found in Pseudomonas fluorescens (strain SBW25).